The chain runs to 68 residues: Small ribosomal subunit protein bS21 (68 aa).

Belongs to the bacterial ribosomal protein bS21 family.

This Endomicrobium trichonymphae protein is Small ribosomal subunit protein bS21.